The chain runs to 457 residues: DNA repair protein RadA (457 aa).

A C4-type zinc finger spans residues 10 to 27 (CQECGYESAKWMGKCPGC). An ATP-binding site is contributed by 97 to 104 (GDPGIGKS). The short motif at 254 to 258 (KNRFG) is the RadA KNRFG motif element. The segment at 353–457 (DAYVNVAGGV…QDALEVTLGR (105 aa)) is lon-protease-like.

Belongs to the RecA family. RadA subfamily.

In terms of biological role, DNA-dependent ATPase involved in processing of recombination intermediates, plays a role in repairing DNA breaks. Stimulates the branch migration of RecA-mediated strand transfer reactions, allowing the 3' invading strand to extend heteroduplex DNA faster. Binds ssDNA in the presence of ADP but not other nucleotides, has ATPase activity that is stimulated by ssDNA and various branched DNA structures, but inhibited by SSB. Does not have RecA's homology-searching function. This is DNA repair protein RadA from Halalkalibacterium halodurans (strain ATCC BAA-125 / DSM 18197 / FERM 7344 / JCM 9153 / C-125) (Bacillus halodurans).